A 515-amino-acid chain; its full sequence is Leucine-rich repeat transmembrane neuronal protein 2 (515 aa).

The N-terminal stretch at 1 to 33 (MGLHFKWPLGAPMLAAIYAMSVVLKMLPALGMA) is a signal peptide. The LRRNT domain maps to 34–61 (CPPKCRCEKLLFYCDSQGFHSVPNATDK). The Extracellular segment spans residues 34-421 (CPPKCRCEKL…EPDNAIFTQR (388 aa)). N-linked (GlcNAc...) asparagine glycosylation is present at Asn57. LRR repeat units lie at residues 63–83 (SLGLSLRHNHITALERDQFAS), 86–107 (QLTWLHLDHNQISTVKEDAFQG), 110–131 (KLKELILSSNKIFYLPNTTFTQ), 134–155 (NLQNLDLSFNQLSSLHPELFYG), 158–179 (KLQTLHLRSNSLRTIPVRLFWD), 182–203 (SLEFLDLSTNRLRSLARNGFAG), 206–227 (KLRELHLEHNQLTKINFAHFLR), 230–251 (SLHTLFLQWNKISNLTCGMDWT), 254–275 (TLEKLDLTGNEIKAIDLTVFET), and 278–299 (NLKILLMDNNKLNSLDSKILNS). Asn126 is a glycosylation site (N-linked (GlcNAc...) asparagine). An N-linked (GlcNAc...) asparagine glycan is attached at Asn243. One can recognise an LRRCT domain in the interval 311 to 362 (NLWECSPRVCALASWLGSFQGRWEHSILCHSPDHTQGEDILDAVHGFQLCWN). Asn362 is a glycosylation site (N-linked (GlcNAc...) asparagine). Residues 422–442 (VITGTMALLFSFFFIIFIVFI) traverse the membrane as a helical segment. The Cytoplasmic portion of the chain corresponds to 443 to 515 (SRKCCPPTLR…QQLPYKECEV (73 aa)). The short motif at 512–515 (ECEV) is the Involved in DLG4-binding element.

It belongs to the LRRTM family. As to quaternary structure, interacts with DLG4. Interacts with neurexin NRXN1; interaction is mediated by heparan sulfate glycan modification on neurexin. As to expression, expressed in neuronal tissues.

Its subcellular location is the cell membrane. It is found in the postsynaptic cell membrane. Functionally, involved in the development and maintenance of excitatory synapses in the vertebrate nervous system. Regulates surface expression of AMPA receptors and instructs the development of functional glutamate release sites. Acts as a ligand for the presynaptic receptors NRXN1-A and NRXN1-B. This chain is Leucine-rich repeat transmembrane neuronal protein 2 (Lrrtm2), found in Mus musculus (Mouse).